Consider the following 216-residue polypeptide: Adenylate kinase (216 aa).

An ATP-binding site is contributed by 11–16; sequence GSGKGT. The segment at 31–60 is NMP; that stretch reads ATGDLFRKAIECGDELGDTVKSYMERGELV. AMP-binding positions include Thr32, Arg37, 58–60, 86–89, and Gln93; these read ELV and GFPR. The segment at 127–163 is LID; the sequence is GRWVCRSCQSPYQSGCAEVTKGKCSRCQGELYQRPDD. Position 128 (Arg128) interacts with ATP. Zn(2+) contacts are provided by Cys131, Cys134, Cys150, and Cys153. Residues Arg160 and Arg171 each contribute to the AMP site. Residue Ala199 participates in ATP binding.

The protein belongs to the adenylate kinase family. As to quaternary structure, monomer.

It localises to the cytoplasm. It catalyses the reaction AMP + ATP = 2 ADP. It participates in purine metabolism; AMP biosynthesis via salvage pathway; AMP from ADP: step 1/1. Functionally, catalyzes the reversible transfer of the terminal phosphate group between ATP and AMP. Plays an important role in cellular energy homeostasis and in adenine nucleotide metabolism. The protein is Adenylate kinase of Dehalococcoides mccartyi (strain ATCC BAA-2100 / JCM 16839 / KCTC 5957 / BAV1).